The chain runs to 360 residues: S-adenosylmethionine:tRNA ribosyltransferase-isomerase (360 aa).

The protein belongs to the QueA family. Monomer.

It localises to the cytoplasm. The catalysed reaction is 7-aminomethyl-7-carbaguanosine(34) in tRNA + S-adenosyl-L-methionine = epoxyqueuosine(34) in tRNA + adenine + L-methionine + 2 H(+). It functions in the pathway tRNA modification; tRNA-queuosine biosynthesis. In terms of biological role, transfers and isomerizes the ribose moiety from AdoMet to the 7-aminomethyl group of 7-deazaguanine (preQ1-tRNA) to give epoxyqueuosine (oQ-tRNA). The polypeptide is S-adenosylmethionine:tRNA ribosyltransferase-isomerase (Rhizobium meliloti (strain 1021) (Ensifer meliloti)).